The chain runs to 173 residues: UPF0316 protein Bsph_0745 (173 aa).

3 helical membrane-spanning segments follow: residues 4–24 (IVLI…RTIF), 31–51 (FLAA…LSLV), and 58–78 (MLAM…GAKI).

It belongs to the UPF0316 family.

It is found in the cell membrane. In Lysinibacillus sphaericus (strain C3-41), this protein is UPF0316 protein Bsph_0745.